We begin with the raw amino-acid sequence, 126 residues long: Holo-[acyl-carrier-protein] synthase (126 aa).

Residues aspartate 9 and glutamate 58 each coordinate Mg(2+).

The protein belongs to the P-Pant transferase superfamily. AcpS family. It depends on Mg(2+) as a cofactor.

The protein localises to the cytoplasm. The catalysed reaction is apo-[ACP] + CoA = holo-[ACP] + adenosine 3',5'-bisphosphate + H(+). In terms of biological role, transfers the 4'-phosphopantetheine moiety from coenzyme A to a Ser of acyl-carrier-protein. This chain is Holo-[acyl-carrier-protein] synthase, found in Pectobacterium atrosepticum (strain SCRI 1043 / ATCC BAA-672) (Erwinia carotovora subsp. atroseptica).